The sequence spans 444 residues: Homogentisate 1,2-dioxygenase (444 aa).

His-298 serves as the catalytic Proton acceptor. Residues His-341 and Glu-347 each contribute to the Fe cation site. Residues Tyr-356 and His-377 each coordinate homogentisate. His-377 is a binding site for Fe cation.

This sequence belongs to the homogentisate dioxygenase family. As to quaternary structure, hexamer; dimer of trimers. Fe cation is required as a cofactor.

The catalysed reaction is homogentisate + O2 = 4-maleylacetoacetate + H(+). It functions in the pathway amino-acid degradation; L-phenylalanine degradation; acetoacetate and fumarate from L-phenylalanine: step 4/6. Functionally, involved in the catabolism of homogentisate (2,5-dihydroxyphenylacetate or 2,5-OH-PhAc), a central intermediate in the degradation of phenylalanine and tyrosine. Catalyzes the oxidative ring cleavage of the aromatic ring of homogentisate to yield maleylacetoacetate. The polypeptide is Homogentisate 1,2-dioxygenase (Burkholderia orbicola (strain AU 1054)).